A 210-amino-acid polypeptide reads, in one-letter code: Noranthrone monooxygenase (210 aa).

4 consecutive transmembrane segments (helical) span residues 59-79, 105-125, 131-151, and 188-208; these read TGSF…PILI, GIAL…YSVG, WMVA…FMNA, and VRAL…CGVV.

Belongs to the anthrone oxygenase family.

The protein resides in the membrane. The enzyme catalyses noranthrone + O2 = norsolorinic acid + H2O. Its pathway is mycotoxin biosynthesis; aflatoxin biosynthesis. Its function is as follows. Monooxygenase that converts norsolorinic acid anthrone to norsolorinic acid during aflatoxin biosynthesis. This is Noranthrone monooxygenase (hypC) from Aspergillus flavus (strain ATCC 200026 / FGSC A1120 / IAM 13836 / NRRL 3357 / JCM 12722 / SRRC 167).